Reading from the N-terminus, the 190-residue chain is Glutathione peroxidase 2 (190 aa).

The active site involves selenocysteine 40. Selenocysteine 40 is a non-standard amino acid (selenocysteine).

Belongs to the glutathione peroxidase family. Homotetramer.

It is found in the cytoplasm. Its subcellular location is the cytosol. The catalysed reaction is 2 glutathione + H2O2 = glutathione disulfide + 2 H2O. It catalyses the reaction a hydroperoxy polyunsaturated fatty acid + 2 glutathione = a hydroxy polyunsaturated fatty acid + glutathione disulfide + H2O. The enzyme catalyses tert-butyl hydroperoxide + 2 glutathione = tert-butanol + glutathione disulfide + H2O. It carries out the reaction cumene hydroperoxide + 2 glutathione = 2-phenylpropan-2-ol + glutathione disulfide + H2O. The catalysed reaction is (13S)-hydroperoxy-(9Z,11E)-octadecadienoate + 2 glutathione = (13S)-hydroxy-(9Z,11E)-octadecadienoate + glutathione disulfide + H2O. It catalyses the reaction (5S)-hydroperoxy-(6E,8Z,11Z,14Z)-eicosatetraenoate + 2 glutathione = (5S)-hydroxy-(6E,8Z,11Z,14Z)-eicosatetraenoate + glutathione disulfide + H2O. The enzyme catalyses (12R)-hydroperoxy-(5Z,8Z,10E,14Z)-eicosatetraenoate + 2 glutathione = (12R)-hydroxy-(5Z,8Z,10E,14Z)-eicosatetraenoate + glutathione disulfide + H2O. It carries out the reaction (15S)-hydroperoxy-(5Z,8Z,11Z,13E)-eicosatetraenoate + 2 glutathione = (15S)-hydroxy-(5Z,8Z,11Z,13E)-eicosatetraenoate + glutathione disulfide + H2O. Its function is as follows. Catalyzes the reduction of hydroperoxides in a glutathione-dependent manner thus regulating cellular redox homeostasis. Can reduce small soluble hydroperoxides such as H2O2, cumene hydroperoxide and tert-butyl hydroperoxide, as well as several fatty acid-derived hydroperoxides. Cannot reduce phosphatidycholine hydroperoxide. The sequence is that of Glutathione peroxidase 2 (GPX2) from Sapajus apella (Brown-capped capuchin).